The sequence spans 274 residues: Thymidylate synthase (274 aa).

Arg21 is a dUMP binding site. (6R)-5,10-methylene-5,6,7,8-tetrahydrofolate is bound at residue His51. Residue 123-124 (RR) participates in dUMP binding. Cys156 serves as the catalytic Nucleophile. DUMP contacts are provided by residues 176–179 (RSAD), Asn187, and 217–219 (HIY). (6R)-5,10-methylene-5,6,7,8-tetrahydrofolate is bound at residue Asp179. Ser273 lines the (6R)-5,10-methylene-5,6,7,8-tetrahydrofolate pocket.

This sequence belongs to the thymidylate synthase family. Bacterial-type ThyA subfamily. In terms of assembly, homodimer.

The protein resides in the cytoplasm. It catalyses the reaction dUMP + (6R)-5,10-methylene-5,6,7,8-tetrahydrofolate = 7,8-dihydrofolate + dTMP. The protein operates within pyrimidine metabolism; dTTP biosynthesis. In terms of biological role, catalyzes the reductive methylation of 2'-deoxyuridine-5'-monophosphate (dUMP) to 2'-deoxythymidine-5'-monophosphate (dTMP) while utilizing 5,10-methylenetetrahydrofolate (mTHF) as the methyl donor and reductant in the reaction, yielding dihydrofolate (DHF) as a by-product. This enzymatic reaction provides an intracellular de novo source of dTMP, an essential precursor for DNA biosynthesis. The polypeptide is Thymidylate synthase (Francisella tularensis subsp. novicida (strain U112)).